We begin with the raw amino-acid sequence, 685 residues long: MESDKMEIYESLIRWLGVLQLSAPHENIQQLSDGVALAQALNLIAPEMFSEGWLAKIKVDVGHNWRLKVSNLKKIIEGVYVYYQDILSLNLSEKLRPDAMKIAEKCDGYELGRLLQLILGCAVNCLEKQKYITQIMELEESLQRNIMAALQDIEYVWQGVSPSRNSINATSLDVKTLQEDRDSLAQKCHETNKKMLILIEEKSVLQQEITKLQALIARYENPNLIGDDGTSLGPVQLGSTRYNDLRKVVDSLKDELLQAETARDDLKMKSAMQEKEIADLQVKIDELHTATAEIAQLKDEIDILKEANDKLKMCETQLLTYKKKLEDYNDLKKQIKMLEECSAEYLKQNLQHEEEAKKYSGLKGQVELYKKEIQDLHAKLDSEMSKTVKTEFEYNQLQAKLSAVQREKENLLSERDVLRETCDELKCGQAAEDSESGNTMSKELHSSDVRDRIERLERENKVLREGQGGQTALSQLLDDANQRNEKLRDQLKAANQRVLLLSQHHNEDISSKSDMDIQLKQALELNEQRSSQIDEAQSQMTQLHTKIANLEAALAAKDQELLAADSRYKKCVEKAKEVIKTLDPRAINEALLLEKPSQDGEASSSSATGSGGDASTLTSTGSGRVPMGVQEEQLIATAFYRLGMTCQREAVDSRLALLSGPGQSFLSRQRQPAPRKPMNMPFAKK.

In terms of domain architecture, Calponin-homology (CH) spans 6-122; that stretch reads MEIYESLIRW…RLLQLILGCA (117 aa). Positions 134 to 570 form a coiled coil; the sequence is QIMELEESLQ…LLAADSRYKK (437 aa). Disordered stretches follow at residues 430-449, 593-625, and 661-685; these read AAEDSESGNTMSKELHSSDV, LEKPSQDGEASSSSATGSGGDASTLTSTGSGRV, and PGQSFLSRQRQPAPRKPMNMPFAKK. A compositionally biased stretch (low complexity) spans 602-623; that stretch reads ASSSSATGSGGDASTLTSTGSG. Residues 661 to 670 show a composition bias toward polar residues; the sequence is PGQSFLSRQR.

This sequence belongs to the hook family. Homodimer. Interacts with microtubules via its N-terminus.

It localises to the cytoplasm. Its subcellular location is the cytoskeleton. The protein resides in the endosome. Its function is as follows. Involved in endocytic trafficking. Probably acts as a cytoskeletal linker protein that tethers endosome vesicles to the cytoskeleton. This is Protein hook from Aedes aegypti (Yellowfever mosquito).